The sequence spans 215 residues: 3-demethoxyubiquinol 3-hydroxylase (215 aa).

The Fe cation site is built by glutamate 64, glutamate 94, histidine 97, glutamate 146, glutamate 178, and histidine 181.

It belongs to the COQ7 family. Fe cation is required as a cofactor.

The protein localises to the cell membrane. The enzyme catalyses a 5-methoxy-2-methyl-3-(all-trans-polyprenyl)benzene-1,4-diol + AH2 + O2 = a 3-demethylubiquinol + A + H2O. The protein operates within cofactor biosynthesis; ubiquinone biosynthesis. Its function is as follows. Catalyzes the hydroxylation of 2-nonaprenyl-3-methyl-6-methoxy-1,4-benzoquinol during ubiquinone biosynthesis. This Pseudomonas putida (strain W619) protein is 3-demethoxyubiquinol 3-hydroxylase.